Consider the following 489-residue polypeptide: MEYLPSLQQEFDELKPSLFELLAEQQLSDLLPPSIRYILAVATHRHPRYLLRVLNSFDEVYALLSLVVERYYLRNFGGSFTENFYSLKRERVLLTKNGEIPRAQLGAPGPVRESLKLRNSDVWKNLLVMVGIPYLKRKLDEGYDIHAAPQASLIMNGGPRYNPSDDLPPHPTIRQRFMHAYKWFLRNVYPSFNAAYYFSILAFNLAYLFDNTKYSSPFLWLIGTRIRRLSSADHQAIAKILEGKPQTPNSRSARSRPGSGLLGLFSPHNLYPQLLTSLRYFLPASIFALKFLEWWHASDFSRQLARKATDTLDIPAPITKGMISPSERKSRPPTKQKEDPESPKSALKTSSPHKRIQPPISASSYLPIFTVPLPPADSDAASSCPVCLNQLTNPTACQTGYVYCYVCIFHWLNGEHQRQIDFMNGDGAGAAWEDDSGDGIDADGDRNETESAAKTGKSRHGKWESGKGRCPVTGRRVLGGTEGLRRVLI.

The Peroxisomal matrix portion of the chain corresponds to 1–17; it reads MEYLPSLQQEFDELKPS. Residues 18 to 45 form a helical membrane-spanning segment; it reads LFELLAEQQLSDLLPPSIRYILAVATHR. At 46 to 49 the chain is on the cytoplasmic side; sequence HPRY. The helical transmembrane segment at 50–74 threads the bilayer; sequence LLRVLNSFDEVYALLSLVVERYYLR. Residues 75–118 lie on the Peroxisomal matrix side of the membrane; that stretch reads NFGGSFTENFYSLKRERVLLTKNGEIPRAQLGAPGPVRESLKLR. Residues 119-156 traverse the membrane as a helical segment; the sequence is NSDVWKNLLVMVGIPYLKRKLDEGYDIHAAPQASLIMN. The Cytoplasmic portion of the chain corresponds to 157–172; that stretch reads GGPRYNPSDDLPPHPT. The helical transmembrane segment at 173–209 threads the bilayer; the sequence is IRQRFMHAYKWFLRNVYPSFNAAYYFSILAFNLAYLF. Residues 210-280 are Peroxisomal matrix-facing; sequence DNTKYSSPFL…YPQLLTSLRY (71 aa). A helical transmembrane segment spans residues 281 to 308; the sequence is FLPASIFALKFLEWWHASDFSRQLARKA. Topologically, residues 309 to 489 are cytoplasmic; sequence TDTLDIPAPI…GTEGLRRVLI (181 aa). The tract at residues 316–359 is disordered; sequence APITKGMISPSERKSRPPTKQKEDPESPKSALKTSSPHKRIQPP. Positions 326-342 are enriched in basic and acidic residues; it reads SERKSRPPTKQKEDPES. Zn(2+) contacts are provided by C384, C387, C404, and C407. An RING-type; degenerate zinc finger spans residues 384–444; sequence CPVCLNQLTN…DSGDGIDADG (61 aa). The segment covering 433–442 has biased composition (acidic residues); sequence EDDSGDGIDA. Residues 433–469 form a disordered region; that stretch reads EDDSGDGIDADGDRNETESAAKTGKSRHGKWESGKGR.

This sequence belongs to the pex2/pex10/pex12 family. Component of the PEX2-PEX10-PEX12 retrotranslocation channel, composed of PEX2, PEX10 and PEX12.

The protein localises to the peroxisome membrane. Its pathway is protein modification; protein ubiquitination. Functionally, component of a retrotranslocation channel required for peroxisome organization by mediating export of the PEX5 receptor from peroxisomes to the cytosol, thereby promoting PEX5 recycling. The retrotranslocation channel is composed of PEX2, PEX10 and PEX12; each subunit contributing transmembrane segments that coassemble into an open channel that specifically allows the passage of PEX5 through the peroxisomal membrane. PEX12 also regulates PEX5 recycling by activating the E3 ubiquitin-protein ligase activity of PEX10. When PEX5 recycling is compromised, PEX12 stimulates PEX10-mediated polyubiquitination of PEX5, leading to its subsequent degradation. This chain is Peroxisome assembly protein 12 (PEX12), found in Emericella nidulans (strain FGSC A4 / ATCC 38163 / CBS 112.46 / NRRL 194 / M139) (Aspergillus nidulans).